The primary structure comprises 397 residues: Neuroplastin (397 aa).

Residues 1–28 (MSGSSLPGALALSLLLVSGSLLPGPGAA) form the signal peptide. Ig-like domains follow at residues 29-134 (QNAG…PSIT), 148-234 (PRIV…IEVK), and 237-327 (PDIT…ASVS). Topologically, residues 29 to 338 (QNAGFVKSPM…VLRVRSHLAP (310 aa)) are extracellular. A disulfide bridge connects residues Cys52 and Cys116. The tract at residues 149-161 (RIVTSEEVIIRES) is narpin; mediates binding with FGFR1 and has antidepressant-like activity. Cys169 and Cys217 form a disulfide bridge. Residues Asn170, Asn196, Asn228, Asn283, Asn295, and Asn316 are each glycosylated (N-linked (GlcNAc...) asparagine). Cys258 and Cys315 are joined by a disulfide. Residues 339 to 359 (LWPFLGILAEIIILVVIIVVY) form a helical membrane-spanning segment. The Cytoplasmic portion of the chain corresponds to 360–397 (EKRKRPDEVPDDDEPAGPMKTNSTNNHKDKNLRQRNTN). The tract at residues 364 to 397 (RPDEVPDDDEPAGPMKTNSTNNHKDKNLRQRNTN) is disordered.

Interacts with ATP2B1; this interaction stabilizes ATP2B1 and increases ATPase activity; this interaction controls T cell calcium homeostasis following T cell activation. Interacts with XKR8; promoting its localization at the cell membrane. N-glycosylated. In terms of tissue distribution, isoform 1 and isoform 2 are widely expressed with variable levels in brain. Isoform 1 is expressed in cerebellum and midbrain. Isoform 1 and isoform 2 are expressed in cerebral cortex, hippocampus and striatum. Isoform 2 is more abundant in the cerebral cortex than isoform 1.

It is found in the cell membrane. The protein localises to the postsynaptic density. Functionally, probable homophilic and heterophilic cell adhesion molecule involved in long term potentiation at hippocampal excitatory synapses through activation of p38MAPK. May also regulate neurite outgrowth by activating the FGFR1 signaling pathway. May play a role in synaptic plasticity. Also acts as a chaperone for ATP2B1; stabilizes ATP2B1 and increases its ATPase activity. Promotes localization of XKR8 at the cell membrane. This chain is Neuroplastin (Nptn), found in Mus musculus (Mouse).